A 467-amino-acid polypeptide reads, in one-letter code: Gamma-aminobutyric acid receptor subunit gamma-3 (467 aa).

The first 17 residues, 1–17 (MAAKLLLLLCLFSGLHA), serve as a signal peptide directing secretion. The Extracellular portion of the chain corresponds to 18–256 (RSRRVEEDEN…FELSRRMGYF (239 aa)). A glycan (N-linked (GlcNAc...) asparagine) is linked at Asn-110. Cys-171 and Cys-185 are joined by a disulfide. An N-linked (GlcNAc...) asparagine glycan is attached at Asn-228. Residues 257–277 (TIQTYIPCILTVVLSWVSFWI) traverse the membrane as a helical segment. Residues 278-283 (KKDATP) lie on the Cytoplasmic side of the membrane. The chain crosses the membrane as a helical span at residues 284–303 (ARTTLGITTVLTMTTLSTIA). Topologically, residues 304-311 (RKSLPRVS) are extracellular. A helical transmembrane segment spans residues 312–332 (YVTAMDLFVTVCFLFVFAALM). Residues 333 to 446 (EYATLNYYSS…DVSELDSYSR (114 aa)) are Cytoplasmic-facing. The chain crosses the membrane as a helical span at residues 447 to 467 (VFFPTSFLLFNLVYWVGYLYL).

This sequence belongs to the ligand-gated ion channel (TC 1.A.9) family. Gamma-aminobutyric acid receptor (TC 1.A.9.5) subfamily. GABRG3 sub-subfamily. As to quaternary structure, heteropentamer, formed by a combination of alpha (GABRA1-6), beta (GABRB1-3), gamma (GABRG1-3), delta (GABRD), epsilon (GABRE), rho (GABRR1-3), pi (GABRP) and theta (GABRQ) chains, each subunit exhibiting distinct physiological and pharmacological properties. Post-translationally, may be palmitoylated. As to expression, expressed in brain.

The protein resides in the postsynaptic cell membrane. Its subcellular location is the cell membrane. It catalyses the reaction chloride(in) = chloride(out). Functionally, gamma subunit of the heteropentameric ligand-gated chloride channel gated by gamma-aminobutyric acid (GABA), a major inhibitory neurotransmitter in the brain. GABA-gated chloride channels, also named GABA(A) receptors (GABAAR), consist of five subunits arranged around a central pore and contain GABA active binding site(s) located at the alpha and beta subunit interface(s). When activated by GABA, GABAARs selectively allow the flow of chloride across the cell membrane down their electrochemical gradient. This chain is Gamma-aminobutyric acid receptor subunit gamma-3, found in Mus musculus (Mouse).